The sequence spans 85 residues: Large ribosomal subunit protein bL27 (85 aa).

The tract at residues 1–21 (MAHKKGVGSSRNGRDSDGQRL) is disordered.

Belongs to the bacterial ribosomal protein bL27 family.

This Citrifermentans bemidjiense (strain ATCC BAA-1014 / DSM 16622 / JCM 12645 / Bem) (Geobacter bemidjiensis) protein is Large ribosomal subunit protein bL27.